Consider the following 203-residue polypeptide: MKKSIVVLFSAVLPFAVFADDAKELVSKLDVMQGIKANFSQKVTDQNGKLIQEGSGVIAMHQPDAFYWHLTAPDESLIVAKDNSVWVYNPFAEEVSILDMEDILKASPMALLVHRDEKRWNEYQIDRKGSCFDITPRQGVESAVDTVSVCFANNTLSDIRLTDAQGSTSHFSLSEQAAVTDADESLFQFQIPDGVSIDDQRRQ.

The N-terminal stretch at 1–19 (MKKSIVVLFSAVLPFAVFA) is a signal peptide.

Belongs to the LolA family. As to quaternary structure, monomer.

Its subcellular location is the periplasm. In terms of biological role, participates in the translocation of lipoproteins from the inner membrane to the outer membrane. Only forms a complex with a lipoprotein if the residue after the N-terminal Cys is not an aspartate (The Asp acts as a targeting signal to indicate that the lipoprotein should stay in the inner membrane). The polypeptide is Outer-membrane lipoprotein carrier protein (Shewanella amazonensis (strain ATCC BAA-1098 / SB2B)).